The sequence spans 256 residues: Type III pantothenate kinase (256 aa).

Residue 6–13 participates in ATP binding; sequence DVGNSNIV. Residues Tyr-100 and 107–110 contribute to the substrate site; that span reads GADR. Asp-109 acts as the Proton acceptor in catalysis. Asp-129 is a K(+) binding site. Thr-132 is a binding site for ATP. Position 184 (Thr-184) interacts with substrate.

The protein belongs to the type III pantothenate kinase family. In terms of assembly, homodimer. The cofactor is NH4(+). K(+) serves as cofactor.

The protein resides in the cytoplasm. The enzyme catalyses (R)-pantothenate + ATP = (R)-4'-phosphopantothenate + ADP + H(+). Its pathway is cofactor biosynthesis; coenzyme A biosynthesis; CoA from (R)-pantothenate: step 1/5. Its function is as follows. Catalyzes the phosphorylation of pantothenate (Pan), the first step in CoA biosynthesis. This is Type III pantothenate kinase from Geotalea daltonii (strain DSM 22248 / JCM 15807 / FRC-32) (Geobacter daltonii).